Here is a 471-residue protein sequence, read N- to C-terminus: Trigger factor (471 aa).

In terms of domain architecture, PPIase FKBP-type spans 174–261; the sequence is GDVAVVSFEG…VKDLKTRELP (88 aa). The segment covering 436 to 446 has biased composition (polar residues); the sequence is ETLPKTKSLNG. The interval 436 to 471 is disordered; the sequence is ETLPKTKSLNGKPSTQGKTSQSKSKKTKTKVEKTTK. The span at 447 to 457 shows a compositional bias: low complexity; the sequence is KPSTQGKTSQS.

Belongs to the FKBP-type PPIase family. Tig subfamily.

It localises to the cytoplasm. It catalyses the reaction [protein]-peptidylproline (omega=180) = [protein]-peptidylproline (omega=0). In terms of biological role, involved in protein export. Acts as a chaperone by maintaining the newly synthesized protein in an open conformation. Functions as a peptidyl-prolyl cis-trans isomerase. The sequence is that of Trigger factor from Prochlorococcus marinus (strain MIT 9211).